The sequence spans 217 residues: Guanylate kinase (217 aa).

In terms of domain architecture, Guanylate kinase-like spans 15–194 (GLMLVLSSPS…AYQRLKRILL (180 aa)). 22 to 29 (SPSGAGKT) contributes to the ATP binding site.

It belongs to the guanylate kinase family.

The protein resides in the cytoplasm. It catalyses the reaction GMP + ATP = GDP + ADP. In terms of biological role, essential for recycling GMP and indirectly, cGMP. In Hyphomonas neptunium (strain ATCC 15444), this protein is Guanylate kinase.